Here is a 360-residue protein sequence, read N- to C-terminus: Ferredoxin--NADP reductase, leaf isozyme, chloroplastic (360 aa).

The transit peptide at 1–52 (MAAAVTAAVSLPYSNSTSLPIRTSIVAPERLVFKKVSLNNVSISGRVGTIRA) directs the protein to the chloroplast. Residues 81 to 203 (KEPYVGRCLL…TGPVGKEMLM (123 aa)) form the FAD-binding FR-type domain. FAD contacts are provided by residues 139–142 (RLYS), 160–162 (CVK), Tyr-166, 177–179 (VCS), and Thr-218. Ser-142 and Lys-162 together coordinate NADP(+). NADP(+) contacts are provided by residues Thr-218, 250-251 (VP), 280-281 (SR), Lys-290, 319-320 (GL), and Glu-358.

This sequence belongs to the ferredoxin--NADP reductase type 1 family. Monomer. Interacts with TIC62 (via C-terminus). FAD serves as cofactor.

Its subcellular location is the plastid. It is found in the chloroplast stroma. The protein resides in the chloroplast thylakoid membrane. The catalysed reaction is 2 reduced [2Fe-2S]-[ferredoxin] + NADP(+) + H(+) = 2 oxidized [2Fe-2S]-[ferredoxin] + NADPH. It participates in energy metabolism; photosynthesis. Functionally, may play a key role in regulating the relative amounts of cyclic and non-cyclic electron flow to meet the demands of the plant for ATP and reducing power. This chain is Ferredoxin--NADP reductase, leaf isozyme, chloroplastic (PETH), found in Pisum sativum (Garden pea).